A 244-amino-acid polypeptide reads, in one-letter code: Small ribosomal subunit protein uS2 (244 aa).

The protein belongs to the universal ribosomal protein uS2 family.

The sequence is that of Small ribosomal subunit protein uS2 from Endomicrobium trichonymphae.